The following is a 515-amino-acid chain: MADKETMKNAIVADLTRIVIWKNMHKNSTDQSEKILLQAINLKSILHRSITGVLDSKNDYEGPAFLELKKLMSYLFAEKPGTGEKKEKDAETDALLHIAQYLRGSEWKKLTVDPANDNILPSQVKENPKKQPAKRKRSTSRPANEKPSAPENKQQEKGDIPDEDKQEQPVKKIRKNSTSAVDGKRKSQAERLAHIKELIEEGDNSKAIAQSHVYLGIKPDELKKLFLVKANTCSICHKPSKKLLNKGCCLFSVNICKKCIGDYMENLHSYMVAKKMGIKPIHCWACSTVQKYEDFIEDDNMFYKRFWYFLLVNGKIALPQTNKDKLRPVVDWLLACDKIDEEDKDKIRLYLPKSAAARKKARSTSTVIEKNVESETKQEETETITPKPAEDETPPMKEEVIEMKPPTPPEPVIKEEEEKVSEEPEIPPIKEIEDKVEPMVEDTPEEDKVAESMADFEPIDFSTMLDEDEKPQVNYYGSPIGHVSDDDDEIKEVAGGNAVQEADTESMDDFMDYFN.

Disordered regions lie at residues 117-188, 362-453, and 496-515; these read DNIL…RKSQ, RSTS…AESM, and GNAV…DYFN. 3 stretches are compositionally biased toward basic and acidic residues: residues 370-380, 388-402, and 428-438; these read KNVESETKQEE, PAED…EVIE, and PIKEIEDKVEP. Residues 502–515 show a composition bias toward acidic residues; it reads ADTESMDDFMDYFN.

This is an uncharacterized protein from Ostreid herpesvirus 1 (isolate France) (OsHV-1).